The following is a 223-amino-acid chain: Type III pantothenate kinase (223 aa).

An ATP-binding site is contributed by 17-24; that stretch reads DIGNTRIH. Residues Tyr-81 and 85-88 each bind substrate; that span reads GIDR. Residue Asp-87 is the Proton acceptor of the active site. Asp-102 lines the K(+) pocket. Ser-105 contacts ATP. A substrate-binding site is contributed by Thr-157.

The protein belongs to the type III pantothenate kinase family. As to quaternary structure, homodimer. NH4(+) serves as cofactor. K(+) is required as a cofactor.

The protein localises to the cytoplasm. It catalyses the reaction (R)-pantothenate + ATP = (R)-4'-phosphopantothenate + ADP + H(+). It functions in the pathway cofactor biosynthesis; coenzyme A biosynthesis; CoA from (R)-pantothenate: step 1/5. Its activity is regulated as follows. Not regulated by feedback inhibition by CoA and its thioesters as described for many other pantothenate kinases. Not inhibited by N-pentylpantothenamide (N5-Pan), and this compound cannot act as a substrate either. Functionally, catalyzes the phosphorylation of pantothenate (Pan), the first step in CoA biosynthesis. Can also utilize CTP or GTP instead of ATP as a phosphoryl donor, albeit to a lesser extent. This Helicobacter pylori (strain ATCC 700392 / 26695) (Campylobacter pylori) protein is Type III pantothenate kinase (coaX).